A 223-amino-acid chain; its full sequence is Cuticular glutathione peroxidase (223 aa).

Positions 1–19 are cleaved as a signal peptide; it reads MSAQLLILSHVVLLQLIVA. An N-linked (GlcNAc...) asparagine glycan is attached at asparagine 39. Cysteine 74 is an active-site residue. An N-linked (GlcNAc...) asparagine glycan is attached at asparagine 92.

It belongs to the glutathione peroxidase family. In terms of assembly, homotetramer.

Its subcellular location is the secreted. The enzyme catalyses 2 glutathione + H2O2 = glutathione disulfide + 2 H2O. Could inhibit the oxidative burst of leukocytes and neutralize the secondary products of lipid peroxidation, thus providing the resistance of these parasites to immune effector mechanisms and their persistence in the mammalian host. It may also be involved in the formation of cross-linking residues such as dityrosine, trityrosine and isotrityrosine identified in cuticular collagen. Highly cross-linked external cortex may also serve to protect the parasite from immune attack. This Wuchereria bancrofti protein is Cuticular glutathione peroxidase.